The chain runs to 1028 residues: Sporulation-specific protein 3 (1028 aa).

Its subcellular location is the prospore membrane. Has a role in spore morphogenesis. Involved in the assembly of the forespore membrane. The chain is Sporulation-specific protein 3 (spo3) from Schizosaccharomyces pombe (strain 972 / ATCC 24843) (Fission yeast).